The sequence spans 81 residues: Photosystem I iron-sulfur center (81 aa).

4Fe-4S ferredoxin-type domains are found at residues 2–31 (SHSV…MVPW) and 37–68 (GQIA…IRVY). Positions 11, 14, 17, 21, 48, 51, 54, and 58 each coordinate [4Fe-4S] cluster.

As to quaternary structure, the cyanobacterial PSI reaction center is composed of one copy each of PsaA,B,C,D,E,F,I,J,K,L,M and X, and forms trimeric complexes. Requires [4Fe-4S] cluster as cofactor.

The protein localises to the cellular thylakoid membrane. The catalysed reaction is reduced [plastocyanin] + hnu + oxidized [2Fe-2S]-[ferredoxin] = oxidized [plastocyanin] + reduced [2Fe-2S]-[ferredoxin]. Functionally, apoprotein for the two 4Fe-4S centers FA and FB of photosystem I (PSI); essential for photochemical activity. FB is the terminal electron acceptor of PSI, donating electrons to ferredoxin. The C-terminus interacts with PsaA/B/D and helps assemble the protein into the PSI complex. Required for binding of PsaD and PsaE to PSI. PSI is a plastocyanin/cytochrome c6-ferredoxin oxidoreductase, converting photonic excitation into a charge separation, which transfers an electron from the donor P700 chlorophyll pair to the spectroscopically characterized acceptors A0, A1, FX, FA and FB in turn. Mutant proteins with a 3Fe-4S center are not observed bound to PSI in vitro, and are probably not able to do so in vivo. This Picosynechococcus sp. (strain ATCC 27264 / PCC 7002 / PR-6) (Agmenellum quadruplicatum) protein is Photosystem I iron-sulfur center (psaC).